We begin with the raw amino-acid sequence, 376 residues long: Putative glutamate--cysteine ligase 2-1 (376 aa).

It belongs to the glutamate--cysteine ligase type 2 family. YbdK subfamily.

The enzyme catalyses L-cysteine + L-glutamate + ATP = gamma-L-glutamyl-L-cysteine + ADP + phosphate + H(+). Its function is as follows. ATP-dependent carboxylate-amine ligase which exhibits weak glutamate--cysteine ligase activity. This Mycobacterium sp. (strain KMS) protein is Putative glutamate--cysteine ligase 2-1.